Consider the following 495-residue polypeptide: Glutamyl-tRNA(Gln) amidotransferase subunit A (495 aa).

Catalysis depends on charge relay system residues Lys78 and Ser158. Catalysis depends on Ser182, which acts as the Acyl-ester intermediate.

Belongs to the amidase family. GatA subfamily. Heterotrimer of A, B and C subunits.

It carries out the reaction L-glutamyl-tRNA(Gln) + L-glutamine + ATP + H2O = L-glutaminyl-tRNA(Gln) + L-glutamate + ADP + phosphate + H(+). In terms of biological role, allows the formation of correctly charged Gln-tRNA(Gln) through the transamidation of misacylated Glu-tRNA(Gln) in organisms which lack glutaminyl-tRNA synthetase. The reaction takes place in the presence of glutamine and ATP through an activated gamma-phospho-Glu-tRNA(Gln). This chain is Glutamyl-tRNA(Gln) amidotransferase subunit A, found in Roseobacter denitrificans (strain ATCC 33942 / OCh 114) (Erythrobacter sp. (strain OCh 114)).